Reading from the N-terminus, the 43-residue chain is CLAVATA3/ESR (CLE)-related protein 16D10 (43 aa).

Positions Met-1 to Ala-30 are cleaved as a signal peptide. Residues Gly-31–Asn-43 carry the CLE motif.

The protein belongs to the CLV3/ESR signal peptide family. As to expression, highly expressed exclusively within the subventral esophageal gland cell during syncytium formation in host plants.

The protein resides in the secreted. It is found in the host cytoplasm. The protein localises to the host extracellular space. Plays a role in the differentiation or division of feeding cells (syncytia) induced in plant roots during infection. Promotes host root growth. The sequence is that of CLAVATA3/ESR (CLE)-related protein 16D10 (16D10) from Meloidogyne arenaria (Peanut root-knot nematode).